The primary structure comprises 362 residues: Methylthioribose-1-phosphate isomerase (362 aa).

D252 acts as the Proton donor in catalysis.

Belongs to the eIF-2B alpha/beta/delta subunits family. MtnA subfamily.

It localises to the cytoplasm. The protein localises to the nucleus. The enzyme catalyses 5-(methylsulfanyl)-alpha-D-ribose 1-phosphate = 5-(methylsulfanyl)-D-ribulose 1-phosphate. It functions in the pathway amino-acid biosynthesis; L-methionine biosynthesis via salvage pathway; L-methionine from S-methyl-5-thio-alpha-D-ribose 1-phosphate: step 1/6. Catalyzes the interconversion of methylthioribose-1-phosphate (MTR-1-P) into methylthioribulose-1-phosphate (MTRu-1-P). The chain is Methylthioribose-1-phosphate isomerase from Drosophila pseudoobscura pseudoobscura (Fruit fly).